Consider the following 279-residue polypeptide: Large ribosomal subunit protein uL2 (279 aa).

The segment at 216–279 (KRPSVRGVVM…IQKRKRNRNR (64 aa)) is disordered. A compositionally biased stretch (basic residues) spans 270–279 (IQKRKRNRNR).

The protein belongs to the universal ribosomal protein uL2 family. As to quaternary structure, part of the 50S ribosomal subunit. Forms a bridge to the 30S subunit in the 70S ribosome.

In terms of biological role, one of the primary rRNA binding proteins. Required for association of the 30S and 50S subunits to form the 70S ribosome, for tRNA binding and peptide bond formation. It has been suggested to have peptidyltransferase activity; this is somewhat controversial. Makes several contacts with the 16S rRNA in the 70S ribosome. In Leptospira interrogans serogroup Icterohaemorrhagiae serovar copenhageni (strain Fiocruz L1-130), this protein is Large ribosomal subunit protein uL2.